Reading from the N-terminus, the 570-residue chain is Sulfite reductase [NADPH] hemoprotein beta-component (570 aa).

Cys434, Cys440, Cys479, and Cys483 together coordinate [4Fe-4S] cluster. Siroheme is bound at residue Cys483.

Belongs to the nitrite and sulfite reductase 4Fe-4S domain family. Alpha(8)-beta(8). The alpha component is a flavoprotein, the beta component is a hemoprotein. It depends on siroheme as a cofactor. The cofactor is [4Fe-4S] cluster.

The enzyme catalyses hydrogen sulfide + 3 NADP(+) + 3 H2O = sulfite + 3 NADPH + 4 H(+). Its pathway is sulfur metabolism; hydrogen sulfide biosynthesis; hydrogen sulfide from sulfite (NADPH route): step 1/1. Its function is as follows. Component of the sulfite reductase complex that catalyzes the 6-electron reduction of sulfite to sulfide. This is one of several activities required for the biosynthesis of L-cysteine from sulfate. This chain is Sulfite reductase [NADPH] hemoprotein beta-component, found in Cronobacter sakazakii (strain ATCC BAA-894) (Enterobacter sakazakii).